Reading from the N-terminus, the 563-residue chain is Tripeptidyl-peptidase 1 (563 aa).

Positions 1–19 (MRLRTCLLGLLALCVASKC) are cleaved as a signal peptide. Residues 20–195 (SYSPEPDQQR…PEPQVSGTVG (176 aa)) constitute a propeptide, removed in mature form. Cysteines 111 and 122 form a disulfide. Positions 199–563 (GVTPSVIRQR…PALLKALIKP (365 aa)) constitute a Peptidase S53 domain. N-linked (GlcNAc...) asparagine glycosylation is found at Asn-210 and Asn-222. Catalysis depends on charge relay system residues Glu-272 and Asp-276. Residues Asn-286, Asn-313, and Asn-443 are each glycosylated (N-linked (GlcNAc...) asparagine). Intrachain disulfides connect Cys-365-Cys-526 and Cys-522-Cys-537. The active-site Charge relay system is Ser-475. Residues Asp-517 and Val-518 each contribute to the Ca(2+) site. Positions 539, 541, and 543 each coordinate Ca(2+).

In terms of assembly, monomer. Interacts with CLN5. Interacts with CLN3. Ca(2+) is required as a cofactor. Post-translationally, activated by autocatalytic proteolytical processing upon acidification. N-glycosylation is required for processing and activity.

Its subcellular location is the lysosome. It localises to the melanosome. The catalysed reaction is Release of an N-terminal tripeptide from a polypeptide, but also has endopeptidase activity.. Its function is as follows. Lysosomal serine protease with tripeptidyl-peptidase I activity. May act as a non-specific lysosomal peptidase which generates tripeptides from the breakdown products produced by lysosomal proteinases. Requires substrates with an unsubstituted N-terminus. The protein is Tripeptidyl-peptidase 1 (TPP1) of Canis lupus familiaris (Dog).